Here is a 288-residue protein sequence, read N- to C-terminus: ATP synthase gamma chain (288 aa).

Belongs to the ATPase gamma chain family. F-type ATPases have 2 components, CF(1) - the catalytic core - and CF(0) - the membrane proton channel. CF(1) has five subunits: alpha(3), beta(3), gamma(1), delta(1), epsilon(1). CF(0) has three main subunits: a, b and c.

Its subcellular location is the cell inner membrane. Functionally, produces ATP from ADP in the presence of a proton gradient across the membrane. The gamma chain is believed to be important in regulating ATPase activity and the flow of protons through the CF(0) complex. In Polaromonas sp. (strain JS666 / ATCC BAA-500), this protein is ATP synthase gamma chain.